A 152-amino-acid polypeptide reads, in one-letter code: Large ribosomal subunit protein bL9 (152 aa).

Belongs to the bacterial ribosomal protein bL9 family.

Functionally, binds to the 23S rRNA. The sequence is that of Large ribosomal subunit protein bL9 from Mycobacterium ulcerans (strain Agy99).